The chain runs to 264 residues: uncharacterized protein (264 aa).

This is an uncharacterized protein from Shigella flexneri.